Here is a 233-residue protein sequence, read N- to C-terminus: Large ribosomal subunit protein uL1 (233 aa).

It belongs to the universal ribosomal protein uL1 family. In terms of assembly, part of the 50S ribosomal subunit.

In terms of biological role, binds directly to 23S rRNA. The L1 stalk is quite mobile in the ribosome, and is involved in E site tRNA release. Protein L1 is also a translational repressor protein, it controls the translation of the L11 operon by binding to its mRNA. This chain is Large ribosomal subunit protein uL1, found in Novosphingobium aromaticivorans (strain ATCC 700278 / DSM 12444 / CCUG 56034 / CIP 105152 / NBRC 16084 / F199).